Here is a 288-residue protein sequence, read N- to C-terminus: Phospholipid phosphatase 2 (288 aa).

Residues 1–4 are Cytoplasmic-facing; sequence MQRR. Residues 5-25 form a helical membrane-spanning segment; sequence WVFVLLDVLCLLVASLPFAIL. Topologically, residues 26–51 are lumenal; the sequence is TLVNAPYKRGFYCGDDSIRYPYRPDT. A helical transmembrane segment spans residues 52 to 72; sequence ITHGLMAGVTITATVILVSAG. The Cytoplasmic segment spans residues 73 to 87; sequence EAYLVYTDRLYSRSD. Residues 88-108 traverse the membrane as a helical segment; it reads FNNYVAAVYKVLGTFLFGAAV. At 109 to 162 the chain is on the lumenal side; that stretch reads SQSLTDLAKYMIGRLRPNFLAVCDPDWSRVNCSVYVQLEKVCRGNPADVTEARL. The interval 117–125 is phosphatase sequence motif I; the sequence is KYMIGRLRP. Asn-139 is a glycosylation site (N-linked (GlcNAc...) asparagine). Residues 163 to 183 form a helical membrane-spanning segment; the sequence is SFYSGHSSFGMYCMVFLALYV. The tract at residues 165–168 is phosphatase sequence motif II; that stretch reads YSGH. The active-site Proton donors is His-168. At 184 to 196 the chain is on the cytoplasmic side; sequence QARLCWKWARLLR. The helical transmembrane segment at 197 to 217 threads the bilayer; it reads PTVQFFLVAFALYVGYTRVSD. The phosphatase sequence motif III stretch occupies residues 213 to 224; the sequence is TRVSDYKHHWSD. Residues 218-226 are Lumenal-facing; sequence YKHHWSDVL. His-220 acts as the Nucleophile in catalysis. The helical transmembrane segment at 227–247 threads the bilayer; it reads VGLLQGALVAALTVCYISDFF. Residues 248–288 lie on the Cytoplasmic side of the membrane; that stretch reads KARPPQHCLKEEELERKPSLSLTLTLGEADHNHYGYPHSSS.

The protein belongs to the PA-phosphatase related phosphoesterase family. As to quaternary structure, forms functional homodimers and homooligomers. Can also form heterooligomers with PLPP1 and PLPP3. Post-translationally, N-glycosylated. As to expression, found mainly in brain, pancreas and placenta.

It is found in the membrane. The protein localises to the cell membrane. It localises to the early endosome membrane. Its subcellular location is the endoplasmic reticulum membrane. It catalyses the reaction a 1,2-diacyl-sn-glycero-3-phosphate + H2O = a 1,2-diacyl-sn-glycerol + phosphate. The enzyme catalyses 1,2-dihexadecanoyl-sn-glycero-3-phosphate + H2O = 1,2-dihexadecanoyl-sn-glycerol + phosphate. The catalysed reaction is 1,2-di-(9Z-octadecenoyl)-sn-glycero-3-phosphate + H2O = 1,2-di-(9Z-octadecenoyl)-sn-glycerol + phosphate. It carries out the reaction a monoacyl-sn-glycero-3-phosphate + H2O = a monoacylglycerol + phosphate. It catalyses the reaction (9Z)-octadecenoyl-sn-glycero-3-phosphate + H2O = (9Z-octadecenoyl)-glycerol + phosphate. The enzyme catalyses sphing-4-enine 1-phosphate + H2O = sphing-4-enine + phosphate. The catalysed reaction is an N-acylsphing-4-enine 1-phosphate + H2O = an N-acylsphing-4-enine + phosphate. It carries out the reaction N-(octanoyl)-sphing-4-enine-1-phosphate + H2O = N-octanoylsphing-4-enine + phosphate. It catalyses the reaction N-(9Z-octadecenoyl)-ethanolamine phosphate + H2O = N-(9Z-octadecenoyl) ethanolamine + phosphate. The protein operates within lipid metabolism; phospholipid metabolism. With respect to regulation, magnesium-independent phospholipid phosphatase. Insensitive to N-ethylmaleimide. Inhibited by sphingosine, zinc ions and modestly by propanolol. Functionally, magnesium-independent phospholipid phosphatase that catalyzes the dephosphorylation of a variety of glycerolipid and sphingolipid phosphate esters including phosphatidate/PA, lysophosphatidate/LPA, sphingosine 1-phosphate/S1P and ceramide 1-phosphate/C1P. Has no apparent extracellular phosphatase activity and therefore most probably acts intracellularly. Also acts on N-oleoyl ethanolamine phosphate/N-(9Z-octadecenoyl)-ethanolamine phosphate, a potential physiological compound. Through dephosphorylation of these bioactive lipid mediators produces new bioactive compounds and may regulate signal transduction in different cellular processes. Indirectly regulates, for instance, cell cycle G1/S phase transition through its phospholipid phosphatase activity. The chain is Phospholipid phosphatase 2 from Homo sapiens (Human).